Here is a 169-residue protein sequence, read N- to C-terminus: Peptide methionine sulfoxide reductase MsrA (169 aa).

Cys-10 is a catalytic residue.

Belongs to the MsrA Met sulfoxide reductase family.

The enzyme catalyses L-methionyl-[protein] + [thioredoxin]-disulfide + H2O = L-methionyl-(S)-S-oxide-[protein] + [thioredoxin]-dithiol. It carries out the reaction [thioredoxin]-disulfide + L-methionine + H2O = L-methionine (S)-S-oxide + [thioredoxin]-dithiol. Its function is as follows. Has an important function as a repair enzyme for proteins that have been inactivated by oxidation. Catalyzes the reversible oxidation-reduction of methionine sulfoxide in proteins to methionine. In Streptococcus pyogenes serotype M3 (strain ATCC BAA-595 / MGAS315), this protein is Peptide methionine sulfoxide reductase MsrA.